Consider the following 306-residue polypeptide: Putative dihydroorotate dehydrogenase A (fumarate) (306 aa).

Residues S20 and K44–G45 each bind FMN. Substrate is bound by residues K44 and N68–L72. Residues N98 and N126 each coordinate FMN. N126 contacts substrate. The Nucleophile role is filled by C129. FMN-binding residues include K164 and I190. N191–T192 contributes to the substrate binding site. Residues G216, G244–G245, and G266–T267 each bind FMN.

The protein belongs to the dihydroorotate dehydrogenase family. Type 1 subfamily. As to quaternary structure, homodimer. FMN serves as cofactor.

The protein localises to the cytoplasm. It carries out the reaction (S)-dihydroorotate + fumarate = orotate + succinate. The protein operates within pyrimidine metabolism; UMP biosynthesis via de novo pathway. In terms of biological role, catalyzes the conversion of dihydroorotate to orotate with fumarate as the electron acceptor. In Aquifex aeolicus (strain VF5), this protein is Putative dihydroorotate dehydrogenase A (fumarate) (pyrD).